A 339-amino-acid polypeptide reads, in one-letter code: Retinol dehydrogenase 10-A (339 aa).

The chain crosses the membrane as a helical; Signal-anchor span at residues 3 to 23; that stretch reads IFVEFFLVMLKVCWAIVMAGF. 40–64 is an NADP(+) binding site; sequence VITGAGGGLGRLFAKEFARRRATLV. Ser195 contributes to the substrate binding site. Residue Tyr208 is the Proton acceptor of the active site.

The protein belongs to the short-chain dehydrogenases/reductases (SDR) family.

It localises to the microsome membrane. Its subcellular location is the endoplasmic reticulum membrane. The enzyme catalyses all-trans-retinol + NADP(+) = all-trans-retinal + NADPH + H(+). It functions in the pathway cofactor metabolism; retinol metabolism. Functionally, retinol dehydrogenase with a clear preference for NADP. Converts all-trans-retinol to all-trans-retinal. Has no detectable activity towards 11-cis-retinol, 9-cis-retinol and 13-cis-retinol. In Danio rerio (Zebrafish), this protein is Retinol dehydrogenase 10-A (rdh10a).